A 306-amino-acid chain; its full sequence is Low density lipoprotein receptor adapter protein 1 (306 aa).

Met1 is subject to N-acetylmethionine. Residue Ser14 is modified to Phosphoserine. The PID domain occupies Gly44 to Glu168. A disordered region spans residues Glu178 to Ser204. Phosphoserine is present on residues Ser197 and Ser200. The Clathrin box signature appears at Leu210–Glu214. The tract at residues Trp247 to Leu274 is AP-2 complex binding. The [DE]-X(1,2)-F-X-X-[FL]-X-X-X-R motif signature appears at Glu255–Arg264.

In terms of assembly, interacts (via PID domain) with LDLR (via NPXY motifs). Binds to soluble clathrin trimers. Interacts with AP2B1; the interaction mediates the association with the AP-2 complex. Interacts with VLDLR. Interacts with LRP2.

It is found in the cytoplasm. Adapter protein (clathrin-associated sorting protein (CLASP)) required for efficient endocytosis of the LDL receptor (LDLR) in polarized cells such as hepatocytes and lymphocytes, but not in non-polarized cells (fibroblasts). May be required for LDL binding and internalization but not for receptor clustering in coated pits. May facilitate the endocytosis of LDLR and LDLR-LDL complexes from coated pits by stabilizing the interaction between the receptor and the structural components of the pits. May also be involved in the internalization of other LDLR family members. Binds to phosphoinositides, which regulate clathrin bud assembly at the cell surface. Required for trafficking of LRP2 to the endocytic recycling compartment which is necessary for LRP2 proteolysis, releasing a tail fragment which translocates to the nucleus and mediates transcriptional repression. The chain is Low density lipoprotein receptor adapter protein 1 from Rattus norvegicus (Rat).